We begin with the raw amino-acid sequence, 311 residues long: Methionyl-tRNA formyltransferase (311 aa).

A (6S)-5,6,7,8-tetrahydrofolate-binding site is contributed by 110–113; it reads SLLP.

This sequence belongs to the Fmt family.

It carries out the reaction L-methionyl-tRNA(fMet) + (6R)-10-formyltetrahydrofolate = N-formyl-L-methionyl-tRNA(fMet) + (6S)-5,6,7,8-tetrahydrofolate + H(+). In terms of biological role, attaches a formyl group to the free amino group of methionyl-tRNA(fMet). The formyl group appears to play a dual role in the initiator identity of N-formylmethionyl-tRNA by promoting its recognition by IF2 and preventing the misappropriation of this tRNA by the elongation apparatus. The polypeptide is Methionyl-tRNA formyltransferase (Streptococcus equi subsp. equi (strain 4047)).